Consider the following 339-residue polypeptide: Deubiquitinase and deneddylase Dub2 (339 aa).

Residues isoleucine 36–phenylalanine 56 traverse the membrane as a helical segment. Residues histidine 203, aspartate 220, and cysteine 282 contribute to the active site.

Belongs to the peptidase C48 family.

The protein localises to the secreted. It localises to the host cell. The protein resides in the membrane. Effector proteins function to alter host cell physiology and promote bacterial survival in host tissues. This protease possesses deubiquitinating and deneddylating activities. In Chlamydia trachomatis serovar B (strain Jali20/OT), this protein is Deubiquitinase and deneddylase Dub2 (cdu2).